A 301-amino-acid polypeptide reads, in one-letter code: Protease HtpX homolog (301 aa).

Transmembrane regions (helical) follow at residues 11 to 31 and 34 to 54; these read VLLL…IAGA and NSAF…YSYW. His138 is a Zn(2+) binding site. Glu139 is an active-site residue. His142 contributes to the Zn(2+) binding site. The next 2 helical transmembrane spans lie at 154-174 and 188-208; these read AAAV…AAIF and LVGL…QLAI. Glu213 provides a ligand contact to Zn(2+).

The protein belongs to the peptidase M48B family. The cofactor is Zn(2+).

It is found in the cell membrane. The sequence is that of Protease HtpX homolog from Kocuria rhizophila (strain ATCC 9341 / DSM 348 / NBRC 103217 / DC2201).